Here is a 152-residue protein sequence, read N- to C-terminus: Ribosomal RNA large subunit methyltransferase H (152 aa).

S-adenosyl-L-methionine is bound by residues leucine 69, glycine 96, and 118–123; that span reads FGKLTF.

The protein belongs to the RNA methyltransferase RlmH family. Homodimer.

It is found in the cytoplasm. The enzyme catalyses pseudouridine(1915) in 23S rRNA + S-adenosyl-L-methionine = N(3)-methylpseudouridine(1915) in 23S rRNA + S-adenosyl-L-homocysteine + H(+). Specifically methylates the pseudouridine at position 1915 (m3Psi1915) in 23S rRNA. The chain is Ribosomal RNA large subunit methyltransferase H from Mesomycoplasma hyopneumoniae (strain 232) (Mycoplasma hyopneumoniae).